Consider the following 336-residue polypeptide: Aspartate--ammonia ligase (336 aa).

The protein belongs to the class-II aminoacyl-tRNA synthetase family. AsnA subfamily.

The protein resides in the cytoplasm. It catalyses the reaction L-aspartate + NH4(+) + ATP = L-asparagine + AMP + diphosphate + H(+). Its pathway is amino-acid biosynthesis; L-asparagine biosynthesis; L-asparagine from L-aspartate (ammonia route): step 1/1. This chain is Aspartate--ammonia ligase, found in Lactobacillus johnsonii (strain CNCM I-12250 / La1 / NCC 533).